A 320-amino-acid chain; its full sequence is Tyrosine recombinase Synpcc7942_B2651 (320 aa).

In terms of domain architecture, Core-binding (CB) spans 16-106; the sequence is VQDWDVLQML…ALKSLVRFSR (91 aa). The 187-residue stretch at 127–313 folds into the Tyr recombinase domain; sequence RDTTGTTPER…RQDFQGECTE (187 aa). Catalysis depends on residues Arg167, Lys193, His264, Arg267, and His291. Tyr300 (O-(3'-phospho-DNA)-tyrosine intermediate) is an active-site residue.

Belongs to the 'phage' integrase family.

The protein localises to the cytoplasm. Site-specific tyrosine recombinase, which acts by catalyzing the cutting and rejoining of the recombining DNA molecules. The polypeptide is Tyrosine recombinase Synpcc7942_B2651 (Synechococcus elongatus (strain ATCC 33912 / PCC 7942 / FACHB-805) (Anacystis nidulans R2)).